The sequence spans 380 residues: G-protein coupled receptor (380 aa).

Helical transmembrane passes span 26–46 (VISIFSLTTFVGLAITLYLGI), 60–80 (LVCCDVLIVNAVCLITLPLWV), 97–117 (FAGMFYTMNVYMSVWSCVIVT), 145–165 (VTILTLLVTFIGLFSLTETSI), 184–204 (AALGYTVPWLAIAIMIVHIIL), 220–240 (ILMWMMFTLLVTQGPYYSLSA), and 275–295 (VAMLVCTHALAITRMFSVPLI). Cysteines 95 and 170 form a disulfide. The interval 328–380 (SQSKLLRGEENPNYDYSPKSVRIKPLKSPGGGDNSSLKDEGYDEESQNGFSIG) is disordered.

The protein belongs to the G-protein coupled receptor 1 family.

The protein resides in the host membrane. The chain is G-protein coupled receptor from Elephas maximus (Indian elephant).